The following is an 89-amino-acid chain: Large ribosomal subunit protein bL27 (89 aa).

Positions 1–21 (MAHKKAGGSSRNGRDSESKRL) are disordered.

Belongs to the bacterial ribosomal protein bL27 family.

This is Large ribosomal subunit protein bL27 from Bartonella quintana (strain Toulouse) (Rochalimaea quintana).